The primary structure comprises 860 residues: Leucine--tRNA ligase (860 aa).

A 'HIGH' region motif is present at residues 42–52 (PYPSGRLHMGH). Residues 619–623 (KMSKS) carry the 'KMSKS' region motif. Residue Lys622 participates in ATP binding.

Belongs to the class-I aminoacyl-tRNA synthetase family.

The protein resides in the cytoplasm. It carries out the reaction tRNA(Leu) + L-leucine + ATP = L-leucyl-tRNA(Leu) + AMP + diphosphate. The polypeptide is Leucine--tRNA ligase (Salmonella typhi).